A 223-amino-acid chain; its full sequence is Voltage-dependent calcium channel gamma-1 subunit (223 aa).

The Cytoplasmic segment spans residues 1–10 (MSQTKTLKVR). A helical transmembrane segment spans residues 11 to 29 (VALLCILVGIVLALVAVVT). At 30-109 (DHWAVLSPHV…TQKEYSISAA (80 aa)) the chain is on the extracellular side. N43 and N80 each carry an N-linked (GlcNAc...) asparagine glycan. C57 and C81 are joined by a disulfide. The helical transmembrane segment at 110 to 130 (AIAIFSLGFIIVGTLCALLSF) threads the bilayer. Residues 131 to 135 (RKKRD) are Cytoplasmic-facing. Residues 136–156 (YLLRPASMFYIFAGLCLSVSA) form a helical membrane-spanning segment. At 157–180 (EVMRQSVQRMVDSEHTAWIAHSLA) the chain is on the extracellular side. The helical transmembrane segment at 181-205 (WSFICACVAAALLLVGGLALLLLAL) threads the bilayer. Residues 206 to 223 (PRMPRDPWESCMDAEPEH) are Cytoplasmic-facing.

It belongs to the PMP-22/EMP/MP20 family. CACNG subfamily. As to quaternary structure, component of a calcium channel complex consisting of a pore-forming alpha subunit (CACNA1S) and the ancillary subunits CACNB1 or CACNB2, CACNG1 and CACNA2D1. The channel complex contains alpha, beta, gamma and delta subunits in a 1:1:1:1 ratio, i.e. it contains either CACNB1 or CACNB2. In terms of processing, N-glycosylated.

The protein resides in the cell membrane. It is found in the sarcolemma. Regulatory subunit of the voltage-gated calcium channel that gives rise to L-type calcium currents in skeletal muscle. Regulates channel inactivation kinetics. In Bos taurus (Bovine), this protein is Voltage-dependent calcium channel gamma-1 subunit (CACNG1).